Reading from the N-terminus, the 252-residue chain is Major prion protein (252 aa).

An N-terminal signal peptide occupies residues 1-22 (MANLGCWMLFLFVATWSDLGLC). Positions 23–38 (KKRPKPGGWNTGGSRY) are interaction with ADGRG6. The tract at residues 23 to 229 (KKRPKPGGWN…ESQAYYQRGS (207 aa)) is interaction with GRB2, ERI3 and SYN1. Positions 26–106 (PKPGGWNTGG…QWNKPSKPKT (81 aa)) are disordered. A run of 5 repeats spans residues 51–58 (PQGGGWGQ), 59–66 (PHGGGWGQ), 67–74 (PHGGGWGQ), 75–82 (PHGGGWGQ), and 83–90 (PHGGGWGQ). The 5 X 8 AA tandem repeats of P-H-G-G-G-W-G-Q stretch occupies residues 51 to 90 (PQGGGWGQPHGGGWGQPHGGGWGQPHGGGWGQPHGGGWGQ). The span at 52-94 (QGGGWGQPHGGGWGQPHGGGWGQPHGGGWGQPHGGGWGQGGGT) shows a compositional bias: gly residues. Cu(2+) is bound by residues His-60, Gly-61, Gly-62, His-68, Gly-69, Gly-70, His-76, Gly-77, Gly-78, His-84, Gly-85, and Gly-86. The cysteines at positions 178 and 213 are disulfide-linked. Asn-180 and Asn-196 each carry an N-linked (GlcNAc...) asparagine glycan. The GPI-anchor amidated serine moiety is linked to residue Ser-229. A propeptide spans 230-252 (SMVLFSSPPVILLISFLIFLIVG) (removed in mature form).

The protein belongs to the prion family. Monomer and homodimer. Has a tendency to aggregate into amyloid fibrils containing a cross-beta spine, formed by a steric zipper of superposed beta-strands. Soluble oligomers may represent an intermediate stage on the path to fibril formation. Copper binding may promote oligomerization. Interacts with GRB2, APP, ERI3/PRNPIP and SYN1. Mislocalized cytosolically exposed PrP interacts with MGRN1; this interaction alters MGRN1 subcellular location and causes lysosomal enlargement. Interacts with APP. Interacts with KIAA1191. Interacts with ADGRG6.

It localises to the cell membrane. The protein resides in the golgi apparatus. In terms of biological role, its primary physiological function is unclear. May play a role in neuronal development and synaptic plasticity. May be required for neuronal myelin sheath maintenance. May promote myelin homeostasis through acting as an agonist for ADGRG6 receptor. May play a role in iron uptake and iron homeostasis. Soluble oligomers are toxic to cultured neuroblastoma cells and induce apoptosis (in vitro). Association with GPC1 (via its heparan sulfate chains) targets PRNP to lipid rafts. Also provides Cu(2+) or Zn(2+) for the ascorbate-mediated GPC1 deaminase degradation of its heparan sulfate side chains. The chain is Major prion protein (PRNP) from Callithrix jacchus (White-tufted-ear marmoset).